Here is a 200-residue protein sequence, read N- to C-terminus: Holliday junction branch migration complex subunit RuvA (200 aa).

The segment at 1–63 (MIASVRGEVL…EDSMTLYGFP (63 aa)) is domain I. The segment at 64-142 (DSESKELFGL…AVASTSGAVP (79 aa)) is domain II. The segment at 142–146 (PLGAG) is flexible linker. Residues 147–200 (GGGSVRDQIVEALVGLGFPAKQAEQAADSVLAEAPESTTSTALRSALSLLGKTR) form a domain III region.

This sequence belongs to the RuvA family. Homotetramer. Forms an RuvA(8)-RuvB(12)-Holliday junction (HJ) complex. HJ DNA is sandwiched between 2 RuvA tetramers; dsDNA enters through RuvA and exits via RuvB. An RuvB hexamer assembles on each DNA strand where it exits the tetramer. Each RuvB hexamer is contacted by two RuvA subunits (via domain III) on 2 adjacent RuvB subunits; this complex drives branch migration. In the full resolvosome a probable DNA-RuvA(4)-RuvB(12)-RuvC(2) complex forms which resolves the HJ.

Its subcellular location is the cytoplasm. The RuvA-RuvB-RuvC complex processes Holliday junction (HJ) DNA during genetic recombination and DNA repair, while the RuvA-RuvB complex plays an important role in the rescue of blocked DNA replication forks via replication fork reversal (RFR). RuvA specifically binds to HJ cruciform DNA, conferring on it an open structure. The RuvB hexamer acts as an ATP-dependent pump, pulling dsDNA into and through the RuvAB complex. HJ branch migration allows RuvC to scan DNA until it finds its consensus sequence, where it cleaves and resolves the cruciform DNA. The chain is Holliday junction branch migration complex subunit RuvA from Rhodococcus jostii (strain RHA1).